We begin with the raw amino-acid sequence, 639 residues long: UvrABC system protein C (639 aa).

Positions 31 to 109 (EQAGVYRMYD…IKKYQPKYNI (79 aa)) constitute a GIY-YIG domain. The UVR domain occupies 218 to 253 (SAVIEQLVARMELASNELHFELAAKYRDQIVTLRKV).

The protein belongs to the UvrC family. In terms of assembly, interacts with UvrB in an incision complex.

The protein resides in the cytoplasm. Functionally, the UvrABC repair system catalyzes the recognition and processing of DNA lesions. UvrC both incises the 5' and 3' sides of the lesion. The N-terminal half is responsible for the 3' incision and the C-terminal half is responsible for the 5' incision. The protein is UvrABC system protein C of Colwellia psychrerythraea (strain 34H / ATCC BAA-681) (Vibrio psychroerythus).